A 649-amino-acid chain; its full sequence is DNA ligase (649 aa).

NAD(+) is bound by residues 62-66 (DSTYD) and 104-105 (ST). Lysine 142 acts as the N6-AMP-lysine intermediate in catalysis. Residues arginine 158, glutamate 189, and lysine 301 each contribute to the NAD(+) site. Cysteine 389, cysteine 392, cysteine 405, and cysteine 411 together coordinate Zn(2+). The region spanning 569-649 (PGETPVFGKI…LDYLALISTY (81 aa)) is the BRCT domain.

Belongs to the NAD-dependent DNA ligase family. LigA subfamily. The cofactor is Mg(2+). Requires Mn(2+) as cofactor.

It carries out the reaction NAD(+) + (deoxyribonucleotide)n-3'-hydroxyl + 5'-phospho-(deoxyribonucleotide)m = (deoxyribonucleotide)n+m + AMP + beta-nicotinamide D-nucleotide.. Functionally, DNA ligase that catalyzes the formation of phosphodiester linkages between 5'-phosphoryl and 3'-hydroxyl groups in double-stranded DNA using NAD as a coenzyme and as the energy source for the reaction. It is essential for DNA replication and repair of damaged DNA. The polypeptide is DNA ligase (Psychromonas ingrahamii (strain DSM 17664 / CCUG 51855 / 37)).